Here is a 418-residue protein sequence, read N- to C-terminus: Aspartate aminotransferase 1 (418 aa).

Position 264 is an N6-(pyridoxal phosphate)lysine (Lys-264).

The protein belongs to the class-I pyridoxal-phosphate-dependent aminotransferase family. Homodimer. Pyridoxal 5'-phosphate is required as a cofactor. In terms of tissue distribution, nodules, roots, stems and leaves, in decreasing order of aspartate aminotransferase 1 concentration. Is the predominant aspartate aminotransferase isoenzyme in roots.

It localises to the cytoplasm. It catalyses the reaction L-aspartate + 2-oxoglutarate = oxaloacetate + L-glutamate. In terms of biological role, important for the metabolism of amino acids and Krebs-cycle related organic acids. In plants, it is involved in nitrogen metabolism and in aspects of carbon and energy metabolism. This Medicago sativa (Alfalfa) protein is Aspartate aminotransferase 1 (AAT-1).